Reading from the N-terminus, the 90-residue chain is Small ribosomal subunit protein bS20 (90 aa).

It belongs to the bacterial ribosomal protein bS20 family.

In terms of biological role, binds directly to 16S ribosomal RNA. The chain is Small ribosomal subunit protein bS20 from Rickettsia felis (strain ATCC VR-1525 / URRWXCal2) (Rickettsia azadi).